The sequence spans 238 residues: Ephrin-A3 (238 aa).

The first 22 residues, 1 to 22 (MAAAPLLLLLLLVPVPLLPLLA), serve as a signal peptide directing secretion. Residues 30–169 (GNRHAVYWNS…RMKVFVCCAS (140 aa)) form the Ephrin RBD domain. N-linked (GlcNAc...) asparagine glycans are attached at residues N38, N67, and N100. Intrachain disulfides connect C63/C110 and C99/C158. G214 carries the GPI-anchor amidated glycine lipid modification. Positions 215–238 (TSPKREHLPLAVGIAFFLMTFLAS) are cleaved as a propeptide — removed in mature form.

The protein belongs to the ephrin family. In terms of assembly, interacts with EPHA8; activates EPHA8. In terms of tissue distribution, expressed in brain, skeletal muscle, spleen, thymus, prostate, testis, ovary, small intestine, and peripheral blood leukocytes.

It is found in the cell membrane. Cell surface GPI-bound ligand for Eph receptors, a family of receptor tyrosine kinases which are crucial for migration, repulsion and adhesion during neuronal, vascular and epithelial development. Binds promiscuously Eph receptors residing on adjacent cells, leading to contact-dependent bidirectional signaling into neighboring cells. The signaling pathway downstream of the receptor is referred to as forward signaling while the signaling pathway downstream of the ephrin ligand is referred to as reverse signaling. The sequence is that of Ephrin-A3 (EFNA3) from Homo sapiens (Human).